A 55-amino-acid chain; its full sequence is Large ribosomal subunit protein bL33 (55 aa).

It belongs to the bacterial ribosomal protein bL33 family.

This Burkholderia ambifaria (strain MC40-6) protein is Large ribosomal subunit protein bL33.